The sequence spans 235 residues: Large ribosomal subunit protein uL1 (235 aa).

This sequence belongs to the universal ribosomal protein uL1 family. Part of the 50S ribosomal subunit.

Binds directly to 23S rRNA. The L1 stalk is quite mobile in the ribosome, and is involved in E site tRNA release. Its function is as follows. Protein L1 is also a translational repressor protein, it controls the translation of the L11 operon by binding to its mRNA. This is Large ribosomal subunit protein uL1 from Prochlorococcus marinus subsp. pastoris (strain CCMP1986 / NIES-2087 / MED4).